Consider the following 261-residue polypeptide: WW domain-binding protein 2 (261 aa).

Residues 1 to 84 enclose the GRAM domain; it reads MALNKNHSEG…YLMKDCEIKQ (84 aa). A Phosphotyrosine modification is found at tyrosine 192. The short motif at 196–200 is the PPxY motif 1 element; sequence PPPPY. The segment covering 196–209 has biased composition (pro residues); the sequence is PPPPYPGPMEPPVS. Residues 196–261 form a disordered region; that stretch reads PPPPYPGPME…YYPPEDKKTQ (66 aa). Residues 210–230 are compositionally biased toward low complexity; sequence GPSAPATPAAEAKAAEAAASA. Tyrosine 231 bears the Phosphotyrosine mark. Over residues 245 to 254 the composition is skewed to pro residues; it reads SQPPPPPYYP. A PPxY motif 2 motif is present at residues 248 to 252; the sequence is PPPPY.

As to quaternary structure, binds to the WW domain of YAP1, WWP1 and WWP2. Interacts with NEDD4. Interacts with ESR1 and UBE3A. Post-translationally, phosphorylated in repsonse to EGF as well as estrogen and progesterone hormones. Tyr-192 and Tyr-231 are phosphorylated by YES and SRC inducing nuclear translocation. Expressed in the ear and the eye. Isoform 1 is expressed in brain, inner ear and organ of Corti. Isoform 2 is only detected in brain.

The protein resides in the cytoplasm. The protein localises to the nucleus. Its function is as follows. Acts as a transcriptional coactivator of estrogen and progesterone receptors (ESR1 and PGR) upon hormone activation. In presence of estrogen, binds to ESR1-responsive promoters. Synergizes with YAP1 to enhance PGR activity. Modulates expression of post-synaptic scaffolding proteins via regulation of ESR1, ESR2 and PGR. This Mus musculus (Mouse) protein is WW domain-binding protein 2 (Wbp2).